Consider the following 230-residue polypeptide: Androgen-dependent TFPI-regulating protein (230 aa).

At M1–C7 the chain is on the cytoplasmic side. The helical transmembrane segment at L8 to G28 threads the bilayer. The Extracellular portion of the chain corresponds to K29 to Y45. Residues L46 to V66 traverse the membrane as a helical segment. The Cytoplasmic portion of the chain corresponds to L67–L85. Residues L86 to F106 traverse the membrane as a helical segment. Over H107–D120 the chain is Extracellular. Residues F121–E141 form a helical membrane-spanning segment. Over T142–G155 the chain is Cytoplasmic. The chain crosses the membrane as a helical span at residues L156 to R173. Topologically, residues Y174 to P190 are extracellular. The chain crosses the membrane as a helical span at residues L191–G211. Over E212 to N230 the chain is Cytoplasmic.

Belongs to the AIG1 family.

Its subcellular location is the cell membrane. It carries out the reaction 9-hexadecanoyloxy-octadecanoate + H2O = 9-hydroxy-octadecanoate + hexadecanoate + H(+). It catalyses the reaction 12-hexadecanoyloxy-octadecanoate + H2O = 12-hydroxyoctadecanoate + hexadecanoate + H(+). The enzyme catalyses 9-(9Z-hexadecenoyloxy)-octadecanoate + H2O = (9Z)-hexadecenoate + 9-hydroxy-octadecanoate + H(+). The catalysed reaction is 12-(9Z-hexadecenoyloxy)-octadecanoate + H2O = 12-hydroxyoctadecanoate + (9Z)-hexadecenoate + H(+). It carries out the reaction 13-(9Z-hexadecenoyloxy)-octadecanoate + H2O = 13-hydroxy-octadecanoate + (9Z)-hexadecenoate + H(+). It catalyses the reaction 9-octadecanoyloxy-octadecanoate + H2O = 9-hydroxy-octadecanoate + octadecanoate + H(+). The enzyme catalyses 12-octadecanoyloxy-octadecanoate + H2O = 12-hydroxyoctadecanoate + octadecanoate + H(+). The catalysed reaction is 13-octadecanoyloxy-octadecanoate + H2O = 13-hydroxy-octadecanoate + octadecanoate + H(+). It carries out the reaction 9-(9Z-octadecenoyloxy)-octadecanoate + H2O = 9-hydroxy-octadecanoate + (9Z)-octadecenoate + H(+). It catalyses the reaction 12-(9Z-octadecenoyloxy)-octadecanoate + H2O = 12-hydroxyoctadecanoate + (9Z)-octadecenoate + H(+). The enzyme catalyses 13-(9Z-octadecenoyloxy)-octadecanoate + H2O = 13-hydroxy-octadecanoate + (9Z)-octadecenoate + H(+). The catalysed reaction is 5-(9Z-octadecenoyloxy)-octadecanoate + H2O = 5-hydroxy-octadecanoate + (9Z)-octadecenoate + H(+). In terms of biological role, hydrolyzes bioactive fatty-acid esters of hydroxy-fatty acids (FAHFAs), but not other major classes of lipids. Shows a preference for FAHFAs with branching distal from the carboxylate head group of the lipids. Regulates the expression and the cell-associated anticoagulant activity of the inhibitor TFPI in endothelial cells (in vitro). This Rattus norvegicus (Rat) protein is Androgen-dependent TFPI-regulating protein (Adtrp).